Reading from the N-terminus, the 342-residue chain is Phenylalanine--tRNA ligase alpha subunit (342 aa).

A Mg(2+)-binding site is contributed by E257.

The protein belongs to the class-II aminoacyl-tRNA synthetase family. Phe-tRNA synthetase alpha subunit type 1 subfamily. As to quaternary structure, tetramer of two alpha and two beta subunits. It depends on Mg(2+) as a cofactor.

Its subcellular location is the cytoplasm. It carries out the reaction tRNA(Phe) + L-phenylalanine + ATP = L-phenylalanyl-tRNA(Phe) + AMP + diphosphate + H(+). This Chlamydia trachomatis serovar A (strain ATCC VR-571B / DSM 19440 / HAR-13) protein is Phenylalanine--tRNA ligase alpha subunit.